The sequence spans 327 residues: Clavesin-2 (327 aa).

The CRAL-TRIO domain occupies 96–257; it reads IKQALKDGFP…EFGGMLPPYD (162 aa). The interval 287–327 is disordered; it reads EVEKELSPKSMKRSQSVVDPTVLKRMDKNEEENMQPLLSLD. S325 is modified (phosphoserine).

In terms of assembly, forms a complex with clathrin heavy chain and gamma-adaptin.

The protein resides in the golgi apparatus. The protein localises to the trans-Golgi network membrane. It localises to the cytoplasmic vesicle. Its subcellular location is the clathrin-coated vesicle. It is found in the early endosome membrane. Required for normal morphology of late endosomes and/or lysosomes in neurons. Binds phosphatidylinositol 3,5-bisphosphate (PtdIns(3,5)P2). This Homo sapiens (Human) protein is Clavesin-2 (CLVS2).